The sequence spans 505 residues: GDP-Man:Man(3)GlcNAc(2)-PP-Dol alpha-1,2-mannosyltransferase (505 aa).

The Lumenal portion of the chain corresponds to Met1–Met4. Residues Leu5–Leu25 traverse the membrane as a helical segment. Residues Asp26–His130 are Cytoplasmic-facing. Positions Leu131–Phe151 form an intramembrane region, helical. Topologically, residues Val152–His374 are cytoplasmic. The helical intramembrane region spans Phe375–Ala395. At Gly396–Asn505 the chain is on the cytoplasmic side.

Belongs to the glycosyltransferase group 1 family.

The protein localises to the endoplasmic reticulum membrane. It catalyses the reaction an alpha-D-Man-(1-&gt;3)-[alpha-D-Man-(1-&gt;6)]-beta-D-Man-(1-&gt;4)-beta-D-GlcNAc-(1-&gt;4)-alpha-D-GlcNAc-diphospho-di-trans,poly-cis-dolichol + 2 GDP-alpha-D-mannose = an alpha-D-Man-(1-&gt;2)-alpha-D-Man-(1-&gt;2)-alpha-D-Man-(1-&gt;3)-[alpha-D-Man-(1-&gt;6)]-beta-D-Man-(1-&gt;4)-beta-D-GlcNAc-(1-&gt;4)-alpha-D-GlcNAc-diphospho-di-trans,poly-cis-dolichol + 2 GDP + 2 H(+). Its pathway is protein modification; protein glycosylation. Functionally, GDP-Man:Man(3)GlcNAc(2)-PP-Dol alpha-1,2-mannosyltransferase that operates in the biosynthetic pathway of dolichol-linked oligosaccharides, the glycan precursors employed in protein asparagine (N)-glycosylation. The assembly of dolichol-linked oligosaccharides begins on the cytosolic side of the endoplasmic reticulum membrane and finishes in its lumen. The sequential addition of sugars to dolichol pyrophosphate produces dolichol-linked oligosaccharides containing fourteen sugars, including two GlcNAcs, nine mannoses and three glucoses. Once assembled, the oligosaccharide is transferred from the lipid to nascent proteins by oligosaccharyltransferases. Catalyzes, on the cytoplasmic face of the endoplasmic reticulum, the addition of the fourth and fifth mannose residues to the dolichol-linked oligosaccharide chain, to produce Man(5)GlcNAc(2)-PP-dolichol core oligosaccharide. This is GDP-Man:Man(3)GlcNAc(2)-PP-Dol alpha-1,2-mannosyltransferase (ALG11) from Candida glabrata (strain ATCC 2001 / BCRC 20586 / JCM 3761 / NBRC 0622 / NRRL Y-65 / CBS 138) (Yeast).